We begin with the raw amino-acid sequence, 259 residues long: Undecaprenyl-diphosphatase 3 (259 aa).

The next 8 membrane-spanning stretches (helical) occupy residues 1-21 (MNWL…FLPI), 39-59 (AGLF…FIYY), 71-91 (FSKL…IGLL), 99-119 (ISKT…FLYM), 133-153 (ITYK…FPAI), 174-194 (AYFS…LQFV), 208-228 (SLIV…SWMI), and 236-256 (LKVF…LQFT).

This sequence belongs to the UppP family.

Its subcellular location is the cell membrane. It catalyses the reaction di-trans,octa-cis-undecaprenyl diphosphate + H2O = di-trans,octa-cis-undecaprenyl phosphate + phosphate + H(+). Its function is as follows. Catalyzes the dephosphorylation of undecaprenyl diphosphate (UPP). Confers resistance to bacitracin. The chain is Undecaprenyl-diphosphatase 3 from Bacillus cereus (strain ATCC 10987 / NRS 248).